A 100-amino-acid chain; its full sequence is Urease subunit gamma (100 aa).

The protein belongs to the urease gamma subunit family. In terms of assembly, heterotrimer of UreA (gamma), UreB (beta) and UreC (alpha) subunits. Three heterotrimers associate to form the active enzyme.

It is found in the cytoplasm. The catalysed reaction is urea + 2 H2O + H(+) = hydrogencarbonate + 2 NH4(+). It functions in the pathway nitrogen metabolism; urea degradation; CO(2) and NH(3) from urea (urease route): step 1/1. The protein is Urease subunit gamma of Burkholderia thailandensis (strain ATCC 700388 / DSM 13276 / CCUG 48851 / CIP 106301 / E264).